An 883-amino-acid chain; its full sequence is Probable ribonuclease ZC3H12C (883 aa).

2 disordered regions span residues 53–109 and 139–158; these read QLSP…ISVE and DFKPEESQTTSKEAKKPPDV. Serine 230 bears the Phosphoserine mark. One can recognise an RNase NYN domain in the interval 245-400; that stretch reads LRPIVIDGSN…LGRHGPSLDN (156 aa). The C3H1-type zinc-finger motif lies at 410–435; it reads EHKKQPCPYGKKCTYGHKCKYYHPER. 3 disordered regions span residues 456–551, 680–738, and 754–775; these read AKTA…FPPQ, FHDP…KAPH, and SRLYDSSPSRQRKPYSRQEGLG. Residues 466 to 477 are compositionally biased toward polar residues; that stretch reads KSNSVPCSTKAD. Basic and acidic residues predominate over residues 503–515; it reads LEEKLPTKNKLET. The span at 517 to 542 shows a compositional bias: polar residues; it reads SVPSLVSIPATSTAKPQSTTSLSNGL. A compositionally biased stretch (low complexity) spans 705-714; it reads HLALHLPHSA.

This sequence belongs to the ZC3H12 family. Mg(2+) is required as a cofactor.

May function as RNase and regulate the levels of target RNA species. This is Probable ribonuclease ZC3H12C (ZC3H12C) from Homo sapiens (Human).